The sequence spans 273 residues: Acetyl-coenzyme A carboxylase carboxyl transferase subunit alpha (273 aa).

The 244-residue stretch at 1 to 244 (MKKATQSKAW…KVVLKQALDE (244 aa)) folds into the CoA carboxyltransferase C-terminal domain.

This sequence belongs to the AccA family. Acetyl-CoA carboxylase is a heterohexamer composed of biotin carboxyl carrier protein (AccB), biotin carboxylase (AccC) and two subunits each of ACCase subunit alpha (AccA) and ACCase subunit beta (AccD).

Its subcellular location is the cytoplasm. The enzyme catalyses N(6)-carboxybiotinyl-L-lysyl-[protein] + acetyl-CoA = N(6)-biotinyl-L-lysyl-[protein] + malonyl-CoA. The protein operates within lipid metabolism; malonyl-CoA biosynthesis; malonyl-CoA from acetyl-CoA: step 1/1. Its function is as follows. Component of the acetyl coenzyme A carboxylase (ACC) complex. First, biotin carboxylase catalyzes the carboxylation of biotin on its carrier protein (BCCP) and then the CO(2) group is transferred by the carboxyltransferase to acetyl-CoA to form malonyl-CoA. In Acinetobacter baumannii (strain AB0057), this protein is Acetyl-coenzyme A carboxylase carboxyl transferase subunit alpha.